A 61-amino-acid polypeptide reads, in one-letter code: Metallothionein-2A (61 aa).

Met-1 carries the post-translational modification N-acetylmethionine. The interval 1-29 is beta; the sequence is MDPNCSCAAGGSCTCAGSCKCKDCKCTSC. A divalent metal cation contacts are provided by Cys-5, Cys-7, Cys-13, Cys-15, Cys-19, Cys-21, Cys-24, Cys-26, Cys-29, Cys-33, Cys-34, Cys-36, Cys-37, Cys-41, Cys-44, Cys-48, Cys-50, and Cys-57. The alpha stretch occupies residues 30-61; the sequence is KKSCCSCCPVGCAKCAQGCICKGASDKCSCCA. Position 58 is a phosphoserine (Ser-58). A divalent metal cation contacts are provided by Cys-59 and Cys-60.

This sequence belongs to the metallothionein superfamily. Type 1 family. As to quaternary structure, interacts with EOLA1.

In terms of biological role, metallothioneins have a high content of cysteine residues that bind various heavy metals; these proteins are transcriptionally regulated by both heavy metals and glucocorticoids. In Sus scrofa (Pig), this protein is Metallothionein-2A (MT2A).